Consider the following 280-residue polypeptide: Acyl-[acyl-carrier-protein]--UDP-N-acetylglucosamine O-acyltransferase (280 aa).

Belongs to the transferase hexapeptide repeat family. LpxA subfamily. As to quaternary structure, homotrimer.

It is found in the cytoplasm. It catalyses the reaction a (3R)-hydroxyacyl-[ACP] + UDP-N-acetyl-alpha-D-glucosamine = a UDP-3-O-[(3R)-3-hydroxyacyl]-N-acetyl-alpha-D-glucosamine + holo-[ACP]. The protein operates within glycolipid biosynthesis; lipid IV(A) biosynthesis; lipid IV(A) from (3R)-3-hydroxytetradecanoyl-[acyl-carrier-protein] and UDP-N-acetyl-alpha-D-glucosamine: step 1/6. In terms of biological role, involved in the biosynthesis of lipid A, a phosphorylated glycolipid that anchors the lipopolysaccharide to the outer membrane of the cell. The polypeptide is Acyl-[acyl-carrier-protein]--UDP-N-acetylglucosamine O-acyltransferase (Chlamydia trachomatis serovar A (strain ATCC VR-571B / DSM 19440 / HAR-13)).